The following is a 122-amino-acid chain: Large ribosomal subunit protein uL14 (122 aa).

Belongs to the universal ribosomal protein uL14 family. Part of the 50S ribosomal subunit. Forms a cluster with proteins L3 and L19. In the 70S ribosome, L14 and L19 interact and together make contacts with the 16S rRNA in bridges B5 and B8.

Binds to 23S rRNA. Forms part of two intersubunit bridges in the 70S ribosome. This Chlorobium limicola (strain DSM 245 / NBRC 103803 / 6330) protein is Large ribosomal subunit protein uL14.